The following is a 358-amino-acid chain: SPbeta prophage-derived probable integrase/recombinase YopP (358 aa).

In terms of domain architecture, Core-binding (CB) spans 23 to 114; it reads NKDIRSSSGN…SLKMLYTYLE (92 aa). The Tyr recombinase domain maps to 137-319; the sequence is KNWDKTTQTE…NIANSAGVTM (183 aa). Residues Arg-178, Lys-206, His-268, and His-295 contribute to the active site. Catalysis depends on Tyr-304, which acts as the O-(3'-phospho-DNA)-tyrosine intermediate.

It belongs to the 'phage' integrase family.

In terms of biological role, probable recombinase that does not seem to have a role in chromosome dimer resolution per se but rather may have some facilitative role during chromosome partitioning in general. This chain is SPbeta prophage-derived probable integrase/recombinase YopP (yopP), found in Bacillus subtilis (strain 168).